A 161-amino-acid chain; its full sequence is Phosphopantetheine adenylyltransferase (161 aa).

Threonine 9 contributes to the substrate binding site. ATP is bound by residues 9–10 (TF) and histidine 17. Positions 41, 73, and 87 each coordinate substrate. Residues 88 to 90 (GMR), glutamate 98, and 123 to 129 (WSYVSST) each bind ATP.

It belongs to the bacterial CoaD family. As to quaternary structure, homohexamer. It depends on Mg(2+) as a cofactor.

It localises to the cytoplasm. The enzyme catalyses (R)-4'-phosphopantetheine + ATP + H(+) = 3'-dephospho-CoA + diphosphate. It functions in the pathway cofactor biosynthesis; coenzyme A biosynthesis; CoA from (R)-pantothenate: step 4/5. Functionally, reversibly transfers an adenylyl group from ATP to 4'-phosphopantetheine, yielding dephospho-CoA (dPCoA) and pyrophosphate. The polypeptide is Phosphopantetheine adenylyltransferase (Actinobacillus succinogenes (strain ATCC 55618 / DSM 22257 / CCUG 43843 / 130Z)).